The primary structure comprises 176 residues: Late lactation protein A (176 aa).

A signal peptide spans 1 to 18; it reads MRVLFLTISLSLFSIIHA. A disulfide bond links Cys78 and Cys171.

It belongs to the calycin superfamily. Lipocalin family. In terms of tissue distribution, mammary gland specific. Secreted in milk.

The protein localises to the secreted. Probably serves a role in the transport of a small ligand released during the hydrolysis of milk fat. In Notamacropus eugenii (Tammar wallaby), this protein is Late lactation protein A (LLPA).